A 484-amino-acid polypeptide reads, in one-letter code: Phosphatidylinositol N-acetylglucosaminyltransferase subunit A (484 aa).

Residues 1-421 are Cytoplasmic-facing; that stretch reads MACRGGAGNG…RLDRLISHCG (421 aa). Phosphoserine occurs at positions 21 and 24. Residues 422-442 form a helical membrane-spanning segment; the sequence is PVTGYIFALLAVFNFLFLIFL. The Lumenal segment spans residues 443–484; that stretch reads RWMTPDSIIDVAIDATGPRGAWTNNYSHSKRGGENNEISETR. Residue N467 is glycosylated (N-linked (GlcNAc...) asparagine).

Belongs to the glycosyltransferase group 1 family. Glycosyltransferase 4 subfamily. As to quaternary structure, component of the glycosylphosphatidylinositol-N-acetylglucosaminyltransferase (GPI-GnT) complex composed at least by PIGA, PIGC, PIGH, PIGP, PIGQ, PIGY and DPM2. Interacts with PIGC, PIGH, PIGP, PIGQ and DPM2. Interacts directly with PIGY; this interaction regulates glycosylphosphatidylinositol-N-acetylglucosaminyltransferase activity. Interacts with PIGQ.

It is found in the endoplasmic reticulum membrane. It carries out the reaction a 1,2-diacyl-sn-glycero-3-phospho-(1D-myo-inositol) + UDP-N-acetyl-alpha-D-glucosamine = a 6-(N-acetyl-alpha-D-glucosaminyl)-1-(1,2-diacyl-sn-glycero-3-phospho)-1D-myo-inositol + UDP + H(+). It functions in the pathway glycolipid biosynthesis; glycosylphosphatidylinositol-anchor biosynthesis. In terms of biological role, catalytic subunit of the glycosylphosphatidylinositol-N-acetylglucosaminyltransferase (GPI-GnT) complex that catalyzes the transfer of N-acetylglucosamine from UDP-N-acetylglucosamine to phosphatidylinositol and participates in the first step of GPI biosynthesis. This Homo sapiens (Human) protein is Phosphatidylinositol N-acetylglucosaminyltransferase subunit A.